A 216-amino-acid chain; its full sequence is Protein-L-isoaspartate O-methyltransferase (216 aa).

Ser-66 is an active-site residue.

This sequence belongs to the methyltransferase superfamily. L-isoaspartyl/D-aspartyl protein methyltransferase family.

Its subcellular location is the cytoplasm. It carries out the reaction [protein]-L-isoaspartate + S-adenosyl-L-methionine = [protein]-L-isoaspartate alpha-methyl ester + S-adenosyl-L-homocysteine. Its function is as follows. Catalyzes the methyl esterification of L-isoaspartyl residues in peptides and proteins that result from spontaneous decomposition of normal L-aspartyl and L-asparaginyl residues. It plays a role in the repair and/or degradation of damaged proteins. This Dechloromonas aromatica (strain RCB) protein is Protein-L-isoaspartate O-methyltransferase.